The sequence spans 286 residues: Phosphoribosylaminoimidazole-succinocarboxamide synthase (286 aa).

This sequence belongs to the SAICAR synthetase family.

The enzyme catalyses 5-amino-1-(5-phospho-D-ribosyl)imidazole-4-carboxylate + L-aspartate + ATP = (2S)-2-[5-amino-1-(5-phospho-beta-D-ribosyl)imidazole-4-carboxamido]succinate + ADP + phosphate + 2 H(+). It functions in the pathway purine metabolism; IMP biosynthesis via de novo pathway; 5-amino-1-(5-phospho-D-ribosyl)imidazole-4-carboxamide from 5-amino-1-(5-phospho-D-ribosyl)imidazole-4-carboxylate: step 1/2. The polypeptide is Phosphoribosylaminoimidazole-succinocarboxamide synthase (Mannheimia succiniciproducens (strain KCTC 0769BP / MBEL55E)).